The primary structure comprises 347 residues: Quinolinate synthase (347 aa).

Residues H47 and S68 each contribute to the iminosuccinate site. Position 113 (C113) interacts with [4Fe-4S] cluster. Residues 139-141 and S156 each bind iminosuccinate; that span reads YAN. C200 is a binding site for [4Fe-4S] cluster. Residues 226–228 and T243 contribute to the iminosuccinate site; that span reads HPE. Residue C297 participates in [4Fe-4S] cluster binding.

This sequence belongs to the quinolinate synthase family. Type 1 subfamily. Requires [4Fe-4S] cluster as cofactor.

The protein localises to the cytoplasm. It carries out the reaction iminosuccinate + dihydroxyacetone phosphate = quinolinate + phosphate + 2 H2O + H(+). It participates in cofactor biosynthesis; NAD(+) biosynthesis; quinolinate from iminoaspartate: step 1/1. Catalyzes the condensation of iminoaspartate with dihydroxyacetone phosphate to form quinolinate. In Shigella boydii serotype 4 (strain Sb227), this protein is Quinolinate synthase.